A 408-amino-acid polypeptide reads, in one-letter code: Imidazolonepropionase (408 aa).

Residues H73 and H75 each contribute to the Fe(3+) site. Residues H73 and H75 each coordinate Zn(2+). 4-imidazolone-5-propanoate contacts are provided by R82, Y145, and H178. Y145 contacts N-formimidoyl-L-glutamate. H243 serves as a coordination point for Fe(3+). H243 serves as a coordination point for Zn(2+). Q246 contacts 4-imidazolone-5-propanoate. A Fe(3+)-binding site is contributed by D318. D318 is a binding site for Zn(2+). Residues N320 and G322 each coordinate N-formimidoyl-L-glutamate. S323 contributes to the 4-imidazolone-5-propanoate binding site.

Belongs to the metallo-dependent hydrolases superfamily. HutI family. Requires Zn(2+) as cofactor. The cofactor is Fe(3+).

It is found in the cytoplasm. It carries out the reaction 4-imidazolone-5-propanoate + H2O = N-formimidoyl-L-glutamate. Its pathway is amino-acid degradation; L-histidine degradation into L-glutamate; N-formimidoyl-L-glutamate from L-histidine: step 3/3. In terms of biological role, catalyzes the hydrolytic cleavage of the carbon-nitrogen bond in imidazolone-5-propanoate to yield N-formimidoyl-L-glutamate. It is the third step in the universal histidine degradation pathway. This chain is Imidazolonepropionase, found in Shewanella putrefaciens (strain CN-32 / ATCC BAA-453).